A 56-amino-acid polypeptide reads, in one-letter code: Large ribosomal subunit protein bL33 (56 aa).

Belongs to the bacterial ribosomal protein bL33 family.

The chain is Large ribosomal subunit protein bL33 from Rickettsia typhi (strain ATCC VR-144 / Wilmington).